The chain runs to 576 residues: Adenine deaminase (576 aa).

It belongs to the metallo-dependent hydrolases superfamily. Adenine deaminase family. The cofactor is Mn(2+).

It carries out the reaction adenine + H2O + H(+) = hypoxanthine + NH4(+). This Syntrophobacter fumaroxidans (strain DSM 10017 / MPOB) protein is Adenine deaminase.